We begin with the raw amino-acid sequence, 512 residues long: Maturase K (512 aa).

Belongs to the intron maturase 2 family. MatK subfamily.

Its subcellular location is the plastid. The protein resides in the chloroplast. Its function is as follows. Usually encoded in the trnK tRNA gene intron. Probably assists in splicing its own and other chloroplast group II introns. In Erythranthe guttata (Yellow monkey flower), this protein is Maturase K.